Reading from the N-terminus, the 476-residue chain is Glucan endo-1,3-beta-glucosidase 9 (476 aa).

Positions 1-25 (MARRLFLLLLAVTAGLSLTGTTVRA) are cleaved as a signal peptide. N-linked (GlcNAc...) asparagine glycosylation is found at asparagine 88 and asparagine 101. Glutamate 122 acts as the Proton donor in catalysis. N-linked (GlcNAc...) asparagine glycosylation is found at asparagine 184, asparagine 216, asparagine 277, asparagine 320, asparagine 342, asparagine 374, and asparagine 405. The cysteines at positions 364 and 424 are disulfide-linked. A lipid anchor (GPI-anchor amidated serine) is attached at serine 453. A propeptide spans 454-476 (SSQTPNFFQSWPLLLLFLLSGLF) (removed in mature form).

The protein belongs to the glycosyl hydrolase 17 family. Contains two additional disulfide bonds.

The protein resides in the secreted. The protein localises to the cell wall. It localises to the cell membrane. The enzyme catalyses Hydrolysis of (1-&gt;3)-beta-D-glucosidic linkages in (1-&gt;3)-beta-D-glucans.. This Arabidopsis thaliana (Mouse-ear cress) protein is Glucan endo-1,3-beta-glucosidase 9.